We begin with the raw amino-acid sequence, 251 residues long: Malonyl-[acyl-carrier protein] O-methyltransferase (251 aa).

It belongs to the methyltransferase superfamily.

The enzyme catalyses malonyl-[ACP] + S-adenosyl-L-methionine = malonyl-[ACP] methyl ester + S-adenosyl-L-homocysteine. It participates in cofactor biosynthesis; biotin biosynthesis. Converts the free carboxyl group of a malonyl-thioester to its methyl ester by transfer of a methyl group from S-adenosyl-L-methionine (SAM). It allows to synthesize pimeloyl-ACP via the fatty acid synthetic pathway. The sequence is that of Malonyl-[acyl-carrier protein] O-methyltransferase from Pseudescherichia vulneris (Escherichia vulneris).